Consider the following 239-residue polypeptide: Acyl-protein thioesterase 1 (239 aa).

Residues serine 124, aspartate 180, and histidine 213 each act as charge relay system in the active site.

This sequence belongs to the AB hydrolase superfamily. AB hydrolase 2 family.

The protein resides in the cytoplasm. It localises to the nucleus. It carries out the reaction S-hexadecanoyl-L-cysteinyl-[protein] + H2O = L-cysteinyl-[protein] + hexadecanoate + H(+). Functionally, hydrolyzes fatty acids from S-acylated cysteine residues in proteins with a strong preference for palmitoylated G-alpha proteins over other acyl substrates. Mediates the deacylation of G-alpha proteins such as GPA1 in vivo, but has weak or no activity toward palmitoylated Ras proteins. Has weak lysophospholipase activity in vitro; however such activity may not exist in vivo. In Emericella nidulans (strain FGSC A4 / ATCC 38163 / CBS 112.46 / NRRL 194 / M139) (Aspergillus nidulans), this protein is Acyl-protein thioesterase 1.